The primary structure comprises 582 residues: Fructose-1,6-bisphosphatase class 3 (582 aa).

The protein belongs to the FBPase class 3 family. Mn(2+) is required as a cofactor.

The catalysed reaction is beta-D-fructose 1,6-bisphosphate + H2O = beta-D-fructose 6-phosphate + phosphate. It functions in the pathway carbohydrate biosynthesis; gluconeogenesis. This is Fructose-1,6-bisphosphatase class 3 from Saccharophagus degradans (strain 2-40 / ATCC 43961 / DSM 17024).